The sequence spans 264 residues: MMESIKKLREMTGAGMMDVKKALADAEGNEDKAIALLRERGIAKAVKKGDREAKEGIVRFAVDGNRAAMVEVNSETDFVARNADFQATVEKLAQAALQAKTNDVEEFKNFTVDGETVGNMVAATAGKIGENIVLNRVAYLEGQQVAGYVHSNGKIGVLVDLAGGDEAKAKDVALHVAAERPQFLTRDEVESGDIEKEREILTNKALAEGKPQQIVEKIVEGQIGKFYQERVLPEQTFVKDNSLTVAKYLGDASVNKFVRFEIGA.

The tract at residues Thr76–Val79 is involved in Mg(2+) ion dislocation from EF-Tu.

It belongs to the EF-Ts family.

The protein resides in the cytoplasm. Its function is as follows. Associates with the EF-Tu.GDP complex and induces the exchange of GDP to GTP. It remains bound to the aminoacyl-tRNA.EF-Tu.GTP complex up to the GTP hydrolysis stage on the ribosome. This Deinococcus radiodurans (strain ATCC 13939 / DSM 20539 / JCM 16871 / CCUG 27074 / LMG 4051 / NBRC 15346 / NCIMB 9279 / VKM B-1422 / R1) protein is Elongation factor Ts.